Consider the following 279-residue polypeptide: Calcium-activated potassium channel subunit beta-3 (279 aa).

The Cytoplasmic segment spans residues 1–60 (MDFSPSSELGFHFVAFILLTRHRTAFPASGKKRETDYSDGDPLDVHKRLPSSAGEDRAVM). Residues 61-81 (LGFAMMGFSVLMFFLLGTTIL) traverse the membrane as a helical segment. Residues 82 to 207 (KPFMLSIQRE…DVILIKKYDQ (126 aa)) are Extracellular-facing. An N-linked (GlcNAc...) asparagine glycan is attached at N131. A helical transmembrane segment spans residues 208–228 (MAIFHCLFWPSLTLLGGALIV). Residues 229–279 (GMVRLTQHLSLLCEKYSTVVRDEVGGKVPYIEQHQFKLCIMRRSKGRAEKS) are Cytoplasmic-facing.

It belongs to the KCNMB (TC 8.A.14.1) family. KCNMB3 subfamily. As to quaternary structure, interacts with KCNMA1 tetramer. There are probably 4 molecules of KCMNB3 per KCNMA1 tetramer. In terms of processing, N-glycosylated. Post-translationally, the extracellular domain contains disulfide bond essential for the gating mechanism. As to expression, isoform 1, isoform 3 and isoform 4 are widely expressed. Isoform 2 is expressed placenta, pancreas, kidney and heart. Isoform 1 and isoform 3 are highly expressed in pancreas and testis.

Its subcellular location is the membrane. Its function is as follows. Regulatory subunit of the calcium activated potassium KCNMA1 (maxiK) channel. Modulates the calcium sensitivity and gating kinetics of KCNMA1, thereby contributing to KCNMA1 channel diversity. Alters the functional properties of the current expressed by the KCNMA1 channel. Isoform 2, isoform 3 and isoform 4 partially inactivate the current of KCNBMA. Isoform 4 induces a fast and incomplete inactivation of KCNMA1 channel that is detectable only at large depolarizations. In contrast, isoform 1 does not induce detectable inactivation of KCNMA1. Two or more subunits of KCNMB3 are required to block the KCNMA1 tetramer. The polypeptide is Calcium-activated potassium channel subunit beta-3 (KCNMB3) (Homo sapiens (Human)).